Consider the following 153-residue polypeptide: 3-hydroxyacyl-[acyl-carrier-protein] dehydratase FabZ (153 aa).

Residue His56 is part of the active site.

The protein belongs to the thioester dehydratase family. FabZ subfamily.

It localises to the cytoplasm. It catalyses the reaction a (3R)-hydroxyacyl-[ACP] = a (2E)-enoyl-[ACP] + H2O. Its function is as follows. Involved in unsaturated fatty acids biosynthesis. Catalyzes the dehydration of short chain beta-hydroxyacyl-ACPs and long chain saturated and unsaturated beta-hydroxyacyl-ACPs. The polypeptide is 3-hydroxyacyl-[acyl-carrier-protein] dehydratase FabZ (Nitrosomonas europaea (strain ATCC 19718 / CIP 103999 / KCTC 2705 / NBRC 14298)).